A 224-amino-acid polypeptide reads, in one-letter code: 7-cyano-7-deazaguanine synthase (224 aa).

8 to 18 (CSGGLDSTVAA) is an ATP binding site. Zn(2+) is bound by residues Cys190, Cys198, Cys201, and Cys204.

Belongs to the QueC family. Zn(2+) is required as a cofactor.

The enzyme catalyses 7-carboxy-7-deazaguanine + NH4(+) + ATP = 7-cyano-7-deazaguanine + ADP + phosphate + H2O + H(+). The protein operates within purine metabolism; 7-cyano-7-deazaguanine biosynthesis. In terms of biological role, catalyzes the ATP-dependent conversion of 7-carboxy-7-deazaguanine (CDG) to 7-cyano-7-deazaguanine (preQ(0)). This is 7-cyano-7-deazaguanine synthase from Methanothrix thermoacetophila (strain DSM 6194 / JCM 14653 / NBRC 101360 / PT) (Methanosaeta thermophila).